The sequence spans 240 residues: Epoxyqueuosine reductase QueH (240 aa).

[4Fe-4S] cluster-binding residues include cysteine 43, cysteine 44, cysteine 129, and cysteine 132. A disulfide bridge connects residues cysteine 211 and cysteine 213.

It belongs to the QueH family.

The catalysed reaction is epoxyqueuosine(34) in tRNA + AH2 = queuosine(34) in tRNA + A + H2O. Its pathway is tRNA modification; tRNA-queuosine biosynthesis. Its function is as follows. Catalyzes the conversion of epoxyqueuosine (oQ) to queuosine (Q), which is a hypermodified base found in the wobble positions of tRNA(Asp), tRNA(Asn), tRNA(His) and tRNA(Tyr). In Staphylococcus aureus (strain Mu50 / ATCC 700699), this protein is Epoxyqueuosine reductase QueH.